Consider the following 328-residue polypeptide: 2-oxoglutarate-dependent dioxygenase gloF (328 aa).

A Fe2OG dioxygenase domain is found at 175–289; that stretch reads DTSELRMNHY…RYSVAYFGKP (115 aa). Residues histidine 201, aspartate 203, and histidine 261 each coordinate Fe cation. Arginine 280 lines the 2-oxoglutarate pocket.

Belongs to the iron/ascorbate-dependent oxidoreductase family. It depends on Fe(2+) as a cofactor.

It participates in mycotoxin biosynthesis. In terms of biological role, 2-oxoglutarate-dependent dioxygenase; part of the gene cluster that mediates the biosynthesis of pneumocandins, lipohexapeptides of the echinocandin family that prevent fungal cell wall formation by non-competitive inhibition of beta-1,3-glucan synthase. The 10,12-dimethylmyristoyl side chain is synthesized by the reducing polyketide synthase gloL/GLPKS4. The thioesterase gloN/GLHYD exclusively interacts with gloL/GLPKS4 to maintain turnover of the polyketide side chain. The 10R,12S-dimethylmyristic acid is then transferred to the first thiolation domain of the nonribosomal peptide synthetase gloA/GLNRPS4 by the acyl-AMP ligase gloD/GLligase, followed by its acylation to L-ornithine to trigger elongation of the cyclic hexapeptide. L-ornithine, 4R-hydroxyl-L-proline (generated from L-proline by the dioxygenase gloF/GLOXY2), 3S-hydroxyl-L-homotyrosine (generated by gloG/GLHtyB, gloH/GLHtyA, gloI/GLHtyC, gloJ/GLHtyD and hydroxylated at C-3 by the dioxygenase gloM/GLOXY1), 3R-hydroxyl-L-glutamine (generated from L-glutamine probably by the dioxygenase gloE/GLOXY3) and 3S-hydroxyl-L-proline (generated from L-proline by the dioxygenase gloF/GLOXY2 to yield pneumocandin B0), or 3S-hydroxyl-4S-methyl-L-proline (generated from L-leucine by the dioxygenase gloC/GLOXY4 to yield pneumocandin A0) are sequentially added to the growing chain. The last C domain of gloA/GLNRPS4 is proposed to be responsible for cyclization by condensation to form the peptide bond between L-ornithine and 3S-hydroxyl-4S-methyl-L-proline (for pneumocandin A0) or 3S-hydroxyl-L-proline (for pneumocandin B0). Finally, the subsequent C-4 hydroxylation of 3S-hydroxyl-L-homotyrosine and L-ornithine dihydroxylation at C-4 and C-5 are performed by the cytochrome P450 monooxygenases gloP/GLP450-1 and gloO/GLP450-2, respectively. The protein is 2-oxoglutarate-dependent dioxygenase gloF of Glarea lozoyensis (strain ATCC 20868 / MF5171).